Consider the following 227-residue polypeptide: Phosphoribosylformylglycinamidine synthase subunit PurQ (227 aa).

In terms of domain architecture, Glutamine amidotransferase type-1 spans Phe-3 to Ser-227. Catalysis depends on Cys-86, which acts as the Nucleophile. Active-site residues include His-194 and Glu-196.

Part of the FGAM synthase complex composed of 1 PurL, 1 PurQ and 2 PurS subunits.

The protein resides in the cytoplasm. The catalysed reaction is N(2)-formyl-N(1)-(5-phospho-beta-D-ribosyl)glycinamide + L-glutamine + ATP + H2O = 2-formamido-N(1)-(5-O-phospho-beta-D-ribosyl)acetamidine + L-glutamate + ADP + phosphate + H(+). The enzyme catalyses L-glutamine + H2O = L-glutamate + NH4(+). The protein operates within purine metabolism; IMP biosynthesis via de novo pathway; 5-amino-1-(5-phospho-D-ribosyl)imidazole from N(2)-formyl-N(1)-(5-phospho-D-ribosyl)glycinamide: step 1/2. Part of the phosphoribosylformylglycinamidine synthase complex involved in the purines biosynthetic pathway. Catalyzes the ATP-dependent conversion of formylglycinamide ribonucleotide (FGAR) and glutamine to yield formylglycinamidine ribonucleotide (FGAM) and glutamate. The FGAM synthase complex is composed of three subunits. PurQ produces an ammonia molecule by converting glutamine to glutamate. PurL transfers the ammonia molecule to FGAR to form FGAM in an ATP-dependent manner. PurS interacts with PurQ and PurL and is thought to assist in the transfer of the ammonia molecule from PurQ to PurL. This chain is Phosphoribosylformylglycinamidine synthase subunit PurQ, found in Shouchella clausii (strain KSM-K16) (Alkalihalobacillus clausii).